A 419-amino-acid chain; its full sequence is Aminoacyltransferase FemB (419 aa).

Belongs to the FemABX family. As to quaternary structure, homodimer. Interacts with FemA.

The protein localises to the cytoplasm. The catalysed reaction is MurNAc-L-Ala-D-isoglutaminyl-L-Lys-(N(6)-tri-Gly)-D-Ala-D-Ala-diphospho-di-trans,octa-cis-undecaprenyl-GlcNAc + 2 glycyl-tRNA(Gly) = MurNAc-L-Ala-D-isoglutaminyl-L-Lys-(N(6)-penta-Gly)-D-Ala-D-Ala-diphospho-di-trans,octa-cis-undecaprenyl-GlcNAc + 2 tRNA(Gly) + 2 H(+). In terms of biological role, catalyzes the formation of the pentaglycine interpeptide bridge, which is characteristic of the S.aureus peptidoglycan. Adds glycines 4 and 5 of the pentaglycine bridge, using glycyl-tRNA(Gly) as donor. Involved in resistance to methicillin. This Staphylococcus aureus (strain NCTC 8325 / PS 47) protein is Aminoacyltransferase FemB (femB).